Here is a 79-residue protein sequence, read N- to C-terminus: Conotoxin 1 (79 aa).

Residues 1 to 22 form the signal peptide; that stretch reads MKLTCVLIITVLFLTASQLITA. A propeptide spanning residues 23–46 is cleaved from the precursor; that stretch reads DYSRDQRQYRAVRLGDEMRTFKGA. Disulfide bonds link Cys49-Cys62, Cys56-Cys67, and Cys61-Cys77.

The protein belongs to the conotoxin O1 superfamily. Expressed by the venom duct.

It is found in the secreted. The sequence is that of Conotoxin 1 from Conus vexillum (Flag cone).